Consider the following 190-residue polypeptide: ATP synthase subunit delta (190 aa).

It belongs to the ATPase delta chain family. F-type ATPases have 2 components, F(1) - the catalytic core - and F(0) - the membrane proton channel. F(1) has five subunits: alpha(3), beta(3), gamma(1), delta(1), epsilon(1). F(0) has three main subunits: a(1), b(2) and c(10-14). The alpha and beta chains form an alternating ring which encloses part of the gamma chain. F(1) is attached to F(0) by a central stalk formed by the gamma and epsilon chains, while a peripheral stalk is formed by the delta and b chains.

The protein resides in the cell inner membrane. In terms of biological role, f(1)F(0) ATP synthase produces ATP from ADP in the presence of a proton or sodium gradient. F-type ATPases consist of two structural domains, F(1) containing the extramembraneous catalytic core and F(0) containing the membrane proton channel, linked together by a central stalk and a peripheral stalk. During catalysis, ATP synthesis in the catalytic domain of F(1) is coupled via a rotary mechanism of the central stalk subunits to proton translocation. Functionally, this protein is part of the stalk that links CF(0) to CF(1). It either transmits conformational changes from CF(0) to CF(1) or is implicated in proton conduction. This is ATP synthase subunit delta from Methylobacterium radiotolerans (strain ATCC 27329 / DSM 1819 / JCM 2831 / NBRC 15690 / NCIMB 10815 / 0-1).